Reading from the N-terminus, the 134-residue chain is Transcriptional activator protein (134 aa).

A Nuclear localization signal motif is present at residues 17–31; that stretch reads KVQHRIAKKTTRRRR. Residues 36-53 fold into a zinc finger; sequence CGCSYFVALGCHNHGFTH. The disordered stretch occupies residues 73–103; sequence KSPVFQDNQTPRETISEEPRHNHNTSPIQLQ. Residues 75-85 are compositionally biased toward polar residues; it reads PVFQDNQTPRE. The interval 119–134 is transactivation; that stretch reads NLDSFTSSDLAFLKSI.

This sequence belongs to the geminiviridae transcriptional activator protein family. In terms of assembly, monomer. Homodimer. Homooligomer. Self-interaction correlates with nuclear localization and efficient activation of transcription. Monomers suppress local silencing by interacting with and inactivating host adenosine kinase 2 (ADK2) in the cytoplasm. Interacts with and inhibits host SNF1 kinase. Binds to ssDNA. May interact with host RPS27A. In terms of processing, phosphorylated.

It is found in the host nucleus. It localises to the host cytoplasm. Functionally, multifunctional protein that modulates host antiviral defenses and promotes host attractiveness to insect vectors. Acts as a suppressor of RNA-mediated gene silencing, also known as post-transcriptional gene silencing (PTGS), a mechanism of plant viral defense that limits the accumulation of viral RNAs. TrAP suppresses the host RNA silencing by inhibiting adenosine kinase 2 (ADK2), a kinase involved in a general methylation pathway. Also suppresses the host basal defense by interacting with and inhibiting SNF1 kinase, a key regulator of cell metabolism implicated in innate antiviral defense. Inhibits signal transduction by the phytohormone jasmonate, making the infected plant more attractive to aphids, which are the second host to play a role as a dissemination vector. Acts by binding to ubiquitin precursor RPS27A, thereby preventing ubiquitin degradation of JAZ. The polypeptide is Transcriptional activator protein (Tomato yellow leaf curl China virus (TYLCCNV)).